The primary structure comprises 461 residues: Gustatory and pheromone receptor 32a (461 aa).

The Cytoplasmic portion of the chain corresponds to 1–100 (MSPNTWVIEM…YSFFVRGVVH (100 aa)). Residues 101-121 (ALTIFNVYSLFTPISAQLFFS) form a helical membrane-spanning segment. At 122-127 (YRETDN) the chain is on the extracellular side. The helical transmembrane segment at 128–148 (VNQWIELLLCILTYTLTVFVC) threads the bilayer. The Cytoplasmic segment spans residues 149–180 (AHNTTSMLRIMNEILQLDEEVRRQFGANLSQN). A helical transmembrane segment spans residues 181–201 (FGFLVKFLVGITACQAYIIVL). The Extracellular segment spans residues 202 to 214 (KIYAVQGEITPTS). A helical transmembrane segment spans residues 215–235 (YILLAFYGIQNGLTATYIVFA). The Cytoplasmic portion of the chain corresponds to 236-317 (SALLRIVYIR…YKGINDCCNL (82 aa)). Residues 318-338 (ILVSFLGYSFYTVTTNCYNLF) form a helical membrane-spanning segment. Residues 339–348 (VQITGKGMVS) are Extracellular-facing. Residues 349–369 (PNILQWCFAWLCLHVSLLALL) form a helical membrane-spanning segment. The Cytoplasmic segment spans residues 370–414 (SRSCGLTTTEANATSQILARVYAKSKEYQNIIDKFLTKSIKQEVQ). A helical membrane pass occupies residues 415-435 (FTAYGFFAIDNSTLFKIFSAV). Residues 436–461 (TTYLVILIQFKQLEDSKVEDPVPEQT) are Extracellular-facing.

This sequence belongs to the insect chemoreceptor superfamily. Gustatory receptor (GR) family. Gr21a subfamily. Expressed in the adult labellar chemosensory neurons. Expressed in tarsal neurons for male-male courtship suppression. In larvae, is expressed in neurons of the terminal external chemosensory organ, and the dorsal and posterior external chemosensory organs.

The protein localises to the cell membrane. Gustatory receptor which mediates acceptance or avoidance behavior, depending on its substrates. Required for the response to N,N-Diethyl-meta-toluamide (DEET), the most widely used insect repellent worldwide. Functions as a pheromone receptor for a male inhibitory pheromone and promotes male-male aggression and suppresses male-male courtship. Also promotes preferentially virgin females courting over mated females. The chain is Gustatory and pheromone receptor 32a (Gr32a) from Drosophila melanogaster (Fruit fly).